A 166-amino-acid chain; its full sequence is Lipoprotein signal peptidase (166 aa).

4 helical membrane passes run 10 to 30 (GGAL…DQLT), 46 to 66 (LTPF…GFLA), 71 to 91 (WQRW…CYLL), and 100 to 120 (FSLS…DRLI). Residues Asp-126 and Asp-144 contribute to the active site. The chain crosses the membrane as a helical span at residues 135 to 155 (WHWPAFNLADSAITVGAVLLI).

The protein belongs to the peptidase A8 family.

The protein resides in the cell inner membrane. It carries out the reaction Release of signal peptides from bacterial membrane prolipoproteins. Hydrolyzes -Xaa-Yaa-Zaa-|-(S,diacylglyceryl)Cys-, in which Xaa is hydrophobic (preferably Leu), and Yaa (Ala or Ser) and Zaa (Gly or Ala) have small, neutral side chains.. Its pathway is protein modification; lipoprotein biosynthesis (signal peptide cleavage). In terms of biological role, this protein specifically catalyzes the removal of signal peptides from prolipoproteins. The protein is Lipoprotein signal peptidase of Burkholderia thailandensis (strain ATCC 700388 / DSM 13276 / CCUG 48851 / CIP 106301 / E264).